Reading from the N-terminus, the 391-residue chain is Uroporphyrinogen decarboxylase, chloroplastic (391 aa).

Substrate is bound by residues 71–75 (RQAGR), Phe90, Ser120, Asp121, Tyr198, Ser253, and His368.

This sequence belongs to the uroporphyrinogen decarboxylase family. Homodimer.

It is found in the plastid. The protein resides in the chloroplast. The enzyme catalyses uroporphyrinogen III + 4 H(+) = coproporphyrinogen III + 4 CO2. It participates in porphyrin-containing compound metabolism; protoporphyrin-IX biosynthesis; coproporphyrinogen-III from 5-aminolevulinate: step 4/4. In terms of biological role, catalyzes the decarboxylation of four acetate groups of uroporphyrinogen-III to yield coproporphyrinogen-III. This Nicotiana tabacum (Common tobacco) protein is Uroporphyrinogen decarboxylase, chloroplastic (DCUP).